The following is a 438-amino-acid chain: sn-glycerol-3-phosphate-binding periplasmic protein UgpB (438 aa).

The signal sequence occupies residues 1-23 (MKPLHYTASALALGLALMGNAQA). Positions 65, 89, 144, 270, 307, 346, and 397 each coordinate sn-glycerol 3-phosphate.

The protein belongs to the bacterial solute-binding protein 1 family. The complex is composed of two ATP-binding proteins (UgpC), two transmembrane proteins (UgpA and UgpE) and a solute-binding protein (UgpB).

The protein resides in the periplasm. Functionally, part of the ABC transporter complex UgpBAEC involved in sn-glycerol-3-phosphate (G3P) import. Binds G3P. This Shigella dysenteriae serotype 1 (strain Sd197) protein is sn-glycerol-3-phosphate-binding periplasmic protein UgpB (ugpB).